Here is a 208-residue protein sequence, read N- to C-terminus: V-type ATP synthase subunit D (208 aa).

The protein belongs to the V-ATPase D subunit family.

Functionally, produces ATP from ADP in the presence of a proton gradient across the membrane. This Streptococcus pyogenes serotype M6 (strain ATCC BAA-946 / MGAS10394) protein is V-type ATP synthase subunit D.